The chain runs to 255 residues: Ribonuclease HII (255 aa).

An RNase H type-2 domain is found at 70–255 (ELIAGVDEVG…FEPIKSIIKK (186 aa)). Asp-76, Glu-77, and Asp-168 together coordinate a divalent metal cation.

Belongs to the RNase HII family. It depends on Mn(2+) as a cofactor. Mg(2+) serves as cofactor.

It is found in the cytoplasm. The catalysed reaction is Endonucleolytic cleavage to 5'-phosphomonoester.. In terms of biological role, endonuclease that specifically degrades the RNA of RNA-DNA hybrids. In Streptococcus thermophilus (strain ATCC BAA-491 / LMD-9), this protein is Ribonuclease HII.